A 30-amino-acid polypeptide reads, in one-letter code: AKLDETLTMLKALTDAKGVPGNEREARDVM.

Belongs to the peptidase M42 family. As to quaternary structure, 12 chains of two different but homologous types, alpha and beta, which can combine in various ratios. A divalent metal cation is required as a cofactor.

In terms of biological role, metalloenzyme of broad specificity, releasing all N-terminal amino acids. The chain is Thermophilic aminopeptidase 1 alpha chain from Geobacillus stearothermophilus (Bacillus stearothermophilus).